Reading from the N-terminus, the 82-residue chain is Protein costars (82 aa).

The protein belongs to the costars family.

In terms of biological role, modulates actin dynamics and cell motility. The chain is Protein costars (cosA) from Dictyostelium discoideum (Social amoeba).